A 46-amino-acid polypeptide reads, in one-letter code: Mu-hexatoxin-Mg2a (46 aa).

Intrachain disulfides connect Cys-3/Cys-18, Cys-10/Cys-24, Cys-17/Cys-36, Cys-21/Cys-43, and Cys-26/Cys-34.

The protein belongs to the neurotoxin 02 (plectoxin) family. 02 (plectoxin) subfamily. Expressed by the venom gland.

Its subcellular location is the secreted. Functionally, competes for binding at site 3 of the insect voltage-gated sodium channel (Nav). Insecticidal neurotoxin. Causes temporary paralysis to lepidopteran larvae (10.3 nmol/g) or to crickets (doses from 0.93 to 119 ug/g). Is not toxic to mice when injected intracranially (high doses). This chain is Mu-hexatoxin-Mg2a, found in Macrothele gigas (Japanese funnel web spider).